Here is a 185-residue protein sequence, read N- to C-terminus: Peptidyl-tRNA hydrolase (185 aa).

Y14 is a tRNA binding site. The active-site Proton acceptor is H19. TRNA contacts are provided by Y64, N66, and N112.

This sequence belongs to the PTH family. Monomer.

The protein resides in the cytoplasm. The catalysed reaction is an N-acyl-L-alpha-aminoacyl-tRNA + H2O = an N-acyl-L-amino acid + a tRNA + H(+). Functionally, hydrolyzes ribosome-free peptidyl-tRNAs (with 1 or more amino acids incorporated), which drop off the ribosome during protein synthesis, or as a result of ribosome stalling. Catalyzes the release of premature peptidyl moieties from peptidyl-tRNA molecules trapped in stalled 50S ribosomal subunits, and thus maintains levels of free tRNAs and 50S ribosomes. In Lactiplantibacillus plantarum (strain ATCC BAA-793 / NCIMB 8826 / WCFS1) (Lactobacillus plantarum), this protein is Peptidyl-tRNA hydrolase.